We begin with the raw amino-acid sequence, 419 residues long: Phospho-N-acetylmuramoyl-pentapeptide-transferase (419 aa).

The next 10 helical transmembrane spans lie at 22–42, 72–92, 99–119, 135–155, 208–228, 238–258, 278–298, 303–323, 328–348, and 396–416; these read YVSF…TVIG, TPTM…LLLA, ILLM…DDYI, IIGQ…NPAV, VLFG…FISN, GLAT…AYVS, LTIF…YNAY, FMGD…ALII, LLPI…IQVF, and KITV…IATL.

It belongs to the glycosyltransferase 4 family. MraY subfamily. Mg(2+) serves as cofactor.

The protein resides in the cell inner membrane. It carries out the reaction UDP-N-acetyl-alpha-D-muramoyl-L-alanyl-gamma-D-glutamyl-meso-2,6-diaminopimeloyl-D-alanyl-D-alanine + di-trans,octa-cis-undecaprenyl phosphate = di-trans,octa-cis-undecaprenyl diphospho-N-acetyl-alpha-D-muramoyl-L-alanyl-D-glutamyl-meso-2,6-diaminopimeloyl-D-alanyl-D-alanine + UMP. It participates in cell wall biogenesis; peptidoglycan biosynthesis. In terms of biological role, catalyzes the initial step of the lipid cycle reactions in the biosynthesis of the cell wall peptidoglycan: transfers peptidoglycan precursor phospho-MurNAc-pentapeptide from UDP-MurNAc-pentapeptide onto the lipid carrier undecaprenyl phosphate, yielding undecaprenyl-pyrophosphoryl-MurNAc-pentapeptide, known as lipid I. The polypeptide is Phospho-N-acetylmuramoyl-pentapeptide-transferase (Porphyromonas gingivalis (strain ATCC 33277 / DSM 20709 / CIP 103683 / JCM 12257 / NCTC 11834 / 2561)).